A 296-amino-acid polypeptide reads, in one-letter code: MMFKQYLQVTKPGIIFGNLISVIGGFLLASKGSIDYPLFIYTLVGVSLVVASGCVFNNYIDRDIDRKMERTKNRVLVKGLISPGVSLVYATLLGIAGFMLLWFGANPLACWLGVMGFVVYVGVYSLYMKRHSVYGTLIGSLSGAAPPVIGYCAVTGDFDSGAAILLAIFSLWQMPHSYAIAIFRFKDYQAANIPVLPVIKGISVAKNHITLYIIAFAVATLMLTLGGYAGYKYLVVAAAVSVWWLGMALRGYKVEDDKVWARKLFGFSIIAITALSIMMSVDFMVPNSQNLLTYVW.

At 1–9 (MMFKQYLQV) the chain is on the cytoplasmic side. The chain crosses the membrane as a helical span at residues 10 to 28 (TKPGIIFGNLISVIGGFLL). The Periplasmic segment spans residues 29–37 (ASKGSIDYP). The helical transmembrane segment at 38-56 (LFIYTLVGVSLVVASGCVF) threads the bilayer. Over 57–78 (NNYIDRDIDRKMERTKNRVLVK) the chain is Cytoplasmic. The chain crosses the membrane as a helical span at residues 79-97 (GLISPGVSLVYATLLGIAG). The Periplasmic segment spans residues 98–107 (FMLLWFGANP). The chain crosses the membrane as a helical span at residues 108-126 (LACWLGVMGFVVYVGVYSL). At 127 to 197 (YMKRHSVYGT…YQAANIPVLP (71 aa)) the chain is on the cytoplasmic side. A helical transmembrane segment spans residues 198–216 (VIKGISVAKNHITLYIIAF). Residues 217–228 (AVATLMLTLGGY) are Periplasmic-facing. A helical transmembrane segment spans residues 229 to 247 (AGYKYLVVAAAVSVWWLGM). The Cytoplasmic segment spans residues 248 to 268 (ALRGYKVEDDKVWARKLFGFS). The chain crosses the membrane as a helical span at residues 269–287 (IIAITALSIMMSVDFMVPN). At 288–296 (SQNLLTYVW) the chain is on the periplasmic side.

The protein belongs to the UbiA prenyltransferase family. Protoheme IX farnesyltransferase subfamily.

It is found in the cell inner membrane. It catalyses the reaction heme b + (2E,6E)-farnesyl diphosphate + H2O = Fe(II)-heme o + diphosphate. Its pathway is porphyrin-containing compound metabolism; heme O biosynthesis; heme O from protoheme: step 1/1. In terms of biological role, converts heme B (protoheme IX) to heme O by substitution of the vinyl group on carbon 2 of heme B porphyrin ring with a hydroxyethyl farnesyl side group. The protein is Protoheme IX farnesyltransferase of Salmonella typhi.